The following is a 438-amino-acid chain: Xylose isomerase (438 aa).

Residues Asp-306 and Asp-308 each contribute to the Mg(2+) site.

The protein belongs to the xylose isomerase family. In terms of assembly, homotetramer. Mg(2+) serves as cofactor.

It localises to the cytoplasm. The enzyme catalyses alpha-D-xylose = alpha-D-xylulofuranose. This is Xylose isomerase from Caldicellulosiruptor bescii (strain ATCC BAA-1888 / DSM 6725 / KCTC 15123 / Z-1320) (Anaerocellum thermophilum).